We begin with the raw amino-acid sequence, 521 residues long: MEANWTAFLFQAHEASHHQQQAAQNSLLPLLSSAVEPPDQKPLLPIPITQKPQGAPETLKDAIGIKKEKPKTSFVCTYCSKAFRDSYHLRRHESCHTGIKLVSRPKKTPTTVVPLISTIAGDSSRTSLVSTIAGILSTVTTSSSGTNPSSSASTTAMPVTQSVKKPSKPVKKNHACEMCGKAFRDVYHLNRHKLSHSDEKPFECPICNQRFKRKDRMTYHVRSHEGGITKPYTCSVCGKGFSRPDHLSCHVKHVHSTERPFKCQTCTAAFATKDRLRTHMVRHEGKVSCNICGKLLSAAYITSHLKTHGQSQSINCNTCKQGISKTCMSEETSNQKQQQQQQQQQQQQQQQQQQHVTSWPGKQVETLRLWEEAVKARKKEAANLCQTSTAATTPVTLTTPFSITSSVSSGTMSNPVTVAAAMSMRSPVNVSSAVNITSPMNIGHPVTITSPLSMTSPLTLTTPVNLPTPVTAPVNIAHPVTITSPMNLPTPMTLAAPLNIAMRPVESMPFLPQALPTSPPW.

The segment at 74–96 (FVCTYCSKAFRDSYHLRRHESCH) adopts a C2H2-type 1 zinc-finger fold. Residues 140–155 (TTSSSGTNPSSSASTT) show a composition bias toward low complexity. The segment at 140–167 (TTSSSGTNPSSSASTTAMPVTQSVKKPS) is disordered. 5 consecutive C2H2-type zinc fingers follow at residues 174–196 (HACE…KLSH), 202–224 (FECP…VRSH), 232–255 (YTCS…KHVH), 261–283 (FKCQ…MVRH), and 287–308 (VSCN…LKTH). Lys-362 is subject to N6-acetyllysine. 4 consecutive repeat copies span residues 394 to 400 (PVTLTTP), 445 to 451 (PVTITSP), 457 to 463 (PLTLTTP), and 479 to 485 (PVTITSP). Positions 394–485 (PVTLTTPFSI…IAHPVTITSP (92 aa)) are 4 X 7 AA repeats of P-[LV]-T-[IL]-T-[ST]-P.

The protein belongs to the krueppel C2H2-type zinc-finger protein family. As to quaternary structure, interacts with ARHGAP22. Ubiquitously expressed. Highest levels in skeletal muscle and kidney.

It is found in the nucleus. In terms of biological role, possible transcription factor. Specifically binds to the CT/GC-rich region of the interleukin-3 promoter and mediates tax transactivation of IL-3. The protein is Vascular endothelial zinc finger 1 (VEZF1) of Homo sapiens (Human).